Here is a 427-residue protein sequence, read N- to C-terminus: Diaminobutyrate--2-oxoglutarate transaminase (427 aa).

The residue at position 269 (Lys-269) is an N6-(pyridoxal phosphate)lysine.

This sequence belongs to the class-III pyridoxal-phosphate-dependent aminotransferase family. It depends on pyridoxal 5'-phosphate as a cofactor.

It catalyses the reaction L-2,4-diaminobutanoate + 2-oxoglutarate = L-aspartate 4-semialdehyde + L-glutamate. Its pathway is amine and polyamine biosynthesis; ectoine biosynthesis; L-ectoine from L-aspartate 4-semialdehyde: step 1/3. Catalyzes reversively the conversion of L-aspartate beta-semialdehyde (ASA) to L-2,4-diaminobutyrate (DABA) by transamination with L-glutamate. The protein is Diaminobutyrate--2-oxoglutarate transaminase (ectB) of Halalkalibacterium halodurans (strain ATCC BAA-125 / DSM 18197 / FERM 7344 / JCM 9153 / C-125) (Bacillus halodurans).